The following is a 374-amino-acid chain: Tetraacyldisaccharide 4'-kinase (374 aa).

59 to 66 (TAGGTGKT) provides a ligand contact to ATP.

Belongs to the LpxK family.

It catalyses the reaction a lipid A disaccharide + ATP = a lipid IVA + ADP + H(+). It participates in glycolipid biosynthesis; lipid IV(A) biosynthesis; lipid IV(A) from (3R)-3-hydroxytetradecanoyl-[acyl-carrier-protein] and UDP-N-acetyl-alpha-D-glucosamine: step 6/6. Functionally, transfers the gamma-phosphate of ATP to the 4'-position of a tetraacyldisaccharide 1-phosphate intermediate (termed DS-1-P) to form tetraacyldisaccharide 1,4'-bis-phosphate (lipid IVA). This is Tetraacyldisaccharide 4'-kinase from Elusimicrobium minutum (strain Pei191).